Here is a 322-residue protein sequence, read N- to C-terminus: Malate dehydrogenase (322 aa).

NAD(+) contacts are provided by residues 10–15 (GSGQIG) and aspartate 34. Substrate is bound by residues arginine 83 and arginine 89. NAD(+)-binding positions include asparagine 96 and 119-121 (ITN). Substrate is bound by residues asparagine 121 and arginine 152. Histidine 176 (proton acceptor) is an active-site residue.

This sequence belongs to the LDH/MDH superfamily. MDH type 3 family.

It carries out the reaction (S)-malate + NAD(+) = oxaloacetate + NADH + H(+). Functionally, catalyzes the reversible oxidation of malate to oxaloacetate. The chain is Malate dehydrogenase from Rhodopseudomonas palustris (strain HaA2).